The sequence spans 439 residues: Perilipin-3 (439 aa).

Low complexity predominate over residues 1–19 (MFASETEASASSTQVTTEE). Residues 1-26 (MFASETEASASSTQVTTEEPVQQPSV) are disordered. N6-acetyllysine is present on Lys66. Residue Ser92 is modified to Phosphoserine. Lys123 participates in a covalent cross-link: Glycyl lysine isopeptide (Lys-Gly) (interchain with G-Cter in SUMO1). Residue Ser131 is modified to Phosphoserine. Position 175 is a phosphothreonine (Thr175). Phosphoserine occurs at positions 180 and 184. A Phosphothreonine modification is found at Thr221. A phosphoserine mark is found at Ser222 and Ser246. Coiled-coil stretches lie at residues 254 to 282 (RAYEHSLGKLQHTRQRAQEALLQLSQALS) and 358 to 381 (AHVKEQALQARRQVEDLQATFSGM). Tyr256 is modified (phosphotyrosine).

This sequence belongs to the perilipin family. Homooligomer. Interacts with M6PR (via the cytoplasmic domain). Interacts with IGF2R (via the cytoplasmic domain). Post-translationally, phosphorylation at Tyr-256 by isoform 1 of CHKA (CHKalpha2) promotes dissociation from lipid droplets: dissociation is followed by recruitment of autophagosome machinery to lipid droplets and subsequent lipid droplet lipolysis.

It is found in the lipid droplet. Its subcellular location is the endosome membrane. It localises to the cytoplasm. In terms of biological role, structural component of lipid droplets, which is required for the formation and maintenance of lipid storage droplets. Required for the transport of mannose 6-phosphate receptors (MPR) from endosomes to the trans-Golgi network. The chain is Perilipin-3 (PLIN3) from Sus scrofa (Pig).